A 96-amino-acid chain; its full sequence is MEARDIIIRPVITEKSMNLMGDRKYTFIVDKRANKIEIKKAVEEIFGVKVEKVYTMNYKGKPKRMGKYEGRTESYKKAIVKLAPDSKGIEFFEGLQ.

Belongs to the universal ribosomal protein uL23 family. Part of the 50S ribosomal subunit. Contacts protein L29, and trigger factor when it is bound to the ribosome.

In terms of biological role, one of the early assembly proteins it binds 23S rRNA. One of the proteins that surrounds the polypeptide exit tunnel on the outside of the ribosome. Forms the main docking site for trigger factor binding to the ribosome. This is Large ribosomal subunit protein uL23 from Caldanaerobacter subterraneus subsp. tengcongensis (strain DSM 15242 / JCM 11007 / NBRC 100824 / MB4) (Thermoanaerobacter tengcongensis).